Reading from the N-terminus, the 318-residue chain is MNGDHMVLGSSVTDKKAIILVTILLLLRLVAIAGNGFIIAALGVEWVLRRMLLPCDXLLVSLGASRFCLQSVVMGKTIYVFLHPMAFPYNPVLQFLAFQWDFLNAATLWFSTWLSVFYCVKIAAFTHPVFLWLKHKLSGWLPWILFSSVGLSSFTTILFFIGNHRMYQNYLRNHLQPWNITGNSIRSYCEKFYLFPLKMITWTMPTAVFFICMILLITSLGRHMKKALLTTSGFREPSMQAHIKALLALLSFAMLFISYFLSLVFSAAGIFPPLDFKFWVWESVIYLCAAVHPIILLFSNCRLRAVLKSCRSSRCGTP.

Residues 1–7 (MNGDHMV) lie on the Extracellular side of the membrane. Residues 8–28 (LGSSVTDKKAIILVTILLLLR) form a helical membrane-spanning segment. Residues 29-40 (LVAIAGNGFIIA) are Cytoplasmic-facing. A helical membrane pass occupies residues 41–61 (ALGVEWVLRRMLLPCDXLLVS). The Extracellular segment spans residues 62–88 (LGASRFCLQSVVMGKTIYVFLHPMAFP). A helical transmembrane segment spans residues 89–109 (YNPVLQFLAFQWDFLNAATLW). At 110–128 (FSTWLSVFYCVKIAAFTHP) the chain is on the cytoplasmic side. A helical membrane pass occupies residues 129–149 (VFLWLKHKLSGWLPWILFSSV). The Extracellular segment spans residues 150–183 (GLSSFTTILFFIGNHRMYQNYLRNHLQPWNITGN). N179 carries N-linked (GlcNAc...) asparagine glycosylation. Residues 184–204 (SIRSYCEKFYLFPLKMITWTM) form a helical membrane-spanning segment. The Cytoplasmic portion of the chain corresponds to 205-234 (PTAVFFICMILLITSLGRHMKKALLTTSGF). Residues 235–255 (REPSMQAHIKALLALLSFAML) form a helical membrane-spanning segment. Residues 256–264 (FISYFLSLV) lie on the Extracellular side of the membrane. Residues 265–285 (FSAAGIFPPLDFKFWVWESVI) traverse the membrane as a helical segment. At 286-318 (YLCAAVHPIILLFSNCRLRAVLKSCRSSRCGTP) the chain is on the cytoplasmic side.

The protein belongs to the G-protein coupled receptor T2R family.

The protein resides in the membrane. In terms of biological role, receptor that may play a role in the perception of bitterness and is gustducin-linked. May play a role in sensing the chemical composition of the gastrointestinal content. The activity of this receptor may stimulate alpha gustducin, mediate PLC-beta-2 activation and lead to the gating of TRPM5. The sequence is that of Taste receptor type 2 member 60 (TAS2R60) from Gorilla gorilla gorilla (Western lowland gorilla).